The sequence spans 129 residues: Lysozyme C-1/C-2 (129 aa).

The 129-residue stretch at 1–129 folds into the C-type lysozyme domain; it reads KVFERCELAR…VSSYVEGCTL (129 aa). 4 disulfides stabilise this stretch: C6/C127, C30/C115, C65/C81, and C77/C95. Residues E35 and D53 contribute to the active site.

Belongs to the glycosyl hydrolase 22 family. As to quaternary structure, monomer.

The catalysed reaction is Hydrolysis of (1-&gt;4)-beta-linkages between N-acetylmuramic acid and N-acetyl-D-glucosamine residues in a peptidoglycan and between N-acetyl-D-glucosamine residues in chitodextrins.. Its function is as follows. Lysozymes have primarily a bacteriolytic function; those in tissues and body fluids are associated with the monocyte-macrophage system and enhance the activity of immunoagents. This Axis axis (Axis deer) protein is Lysozyme C-1/C-2.